A 701-amino-acid polypeptide reads, in one-letter code: Elongation factor G (701 aa).

In terms of domain architecture, tr-type G spans 8–290 (KRYRNIGICA…AVIEFLPAPD (283 aa)). GTP is bound by residues 17-24 (AHVDAGKT), 88-92 (DTPGH), and 142-145 (NKMD).

This sequence belongs to the TRAFAC class translation factor GTPase superfamily. Classic translation factor GTPase family. EF-G/EF-2 subfamily.

The protein resides in the cytoplasm. In terms of biological role, catalyzes the GTP-dependent ribosomal translocation step during translation elongation. During this step, the ribosome changes from the pre-translocational (PRE) to the post-translocational (POST) state as the newly formed A-site-bound peptidyl-tRNA and P-site-bound deacylated tRNA move to the P and E sites, respectively. Catalyzes the coordinated movement of the two tRNA molecules, the mRNA and conformational changes in the ribosome. The sequence is that of Elongation factor G from Marinobacter nauticus (strain ATCC 700491 / DSM 11845 / VT8) (Marinobacter aquaeolei).